The following is a 419-amino-acid chain: C2 calcium-dependent domain-containing protein 4C (419 aa).

Disordered regions lie at residues 1–96 (MRKT…LASE), 115–136 (EDWT…MSLP), 151–225 (AESP…SPFG), and 247–300 (VSQL…HTVK). The segment covering 75–94 (LASPGPRRAPRSPRLPAKLA) has biased composition (low complexity). The span at 186-196 (KGNGGDGGSRE) shows a compositional bias: gly residues. Residues 212 to 225 (ESDTGSSAESSPFG) show a composition bias toward polar residues. Phosphoserine occurs at positions 259, 261, and 270. A C2 domain is found at 303-419 (TRGSVRLLAE…LPLTSLLPFL (117 aa)).

Belongs to the C2CD4 family.

This is C2 calcium-dependent domain-containing protein 4C (C2cd4c) from Mus musculus (Mouse).